The sequence spans 202 residues: Small ribosomal subunit protein uS4c (202 aa).

Positions 90–152 constitute an S4 RNA-binding domain; it reads MRLDNVIFRL…RKSESIINKN (63 aa).

It belongs to the universal ribosomal protein uS4 family. In terms of assembly, part of the 30S ribosomal subunit. Contacts protein S5. The interaction surface between S4 and S5 is involved in control of translational fidelity.

The protein localises to the plastid. The protein resides in the chloroplast. Functionally, one of the primary rRNA binding proteins, it binds directly to 16S rRNA where it nucleates assembly of the body of the 30S subunit. Its function is as follows. With S5 and S12 plays an important role in translational accuracy. The sequence is that of Small ribosomal subunit protein uS4c (rps4) from Dendrohypopterygium filiculiforme (Moss).